Here is a 227-residue protein sequence, read N- to C-terminus: LysM and putative peptidoglycan-binding domain-containing protein 1 (227 aa).

Phosphoserine occurs at positions 23 and 33. A LysM domain is found at 40-84 (LEHQLEPGDTLAGLALKYGVTMEQIKRTNRLYTNDSIFLKKTLYI). The disordered stretch occupies residues 95-157 (NGLDSEEEEN…PSHDLSASDF (63 aa)). Residues 98 to 108 (DSEEEENDGEE) show a composition bias toward acidic residues. At Ser99 the chain carries Phosphoserine. A compositionally biased stretch (polar residues) spans 143-152 (QGTSTPSHDL). Ser166, Ser181, Ser194, and Ser212 each carry phosphoserine. Residues 169–227 (KKAAAQKLRKGESGVPEEDTGLYPSSPRMQQRAVLGPVPLTRTSRTQTLRDQEDEIFKL) are disordered. Residues 216–227 (TLRDQEDEIFKL) are compositionally biased toward basic and acidic residues.

The sequence is that of LysM and putative peptidoglycan-binding domain-containing protein 1 (Lysmd1) from Rattus norvegicus (Rat).